Reading from the N-terminus, the 375-residue chain is 2-methylcitrate synthase (375 aa).

Substrate contacts are provided by Lys-72 and His-187. His-222 is a catalytic residue. 255-259 (KIMGF) contacts CoA. Residue His-261 is part of the active site. Arg-270 serves as a coordination point for substrate. The active site involves Asp-312. Residues Arg-337 and Arg-356 each coordinate substrate.

It belongs to the citrate synthase family. In terms of assembly, homodimer.

The enzyme catalyses propanoyl-CoA + oxaloacetate + H2O = (2S,3S)-2-methylcitrate + CoA + H(+). It carries out the reaction oxaloacetate + acetyl-CoA + H2O = citrate + CoA + H(+). The protein operates within organic acid metabolism; propanoate degradation. Its pathway is carbohydrate metabolism; tricarboxylic acid cycle; isocitrate from oxaloacetate: step 1/2. Functionally, involved in the catabolism of short chain fatty acids (SCFA) via the tricarboxylic acid (TCA)(acetyl degradation route) and via the 2-methylcitrate cycle II (propionate degradation route). Catalyzes the Claisen condensation of propionyl-CoA and oxaloacetate (OAA) to yield 2-methylcitrate (2-MC) and CoA. Catalyzes the condensation of oxaloacetate with acetyl-CoA. This is 2-methylcitrate synthase (prpC) from Shewanella oneidensis (strain ATCC 700550 / JCM 31522 / CIP 106686 / LMG 19005 / NCIMB 14063 / MR-1).